The following is a 107-amino-acid chain: uncharacterized protein (107 aa).

Helical transmembrane passes span 14 to 34 (YLAE…IVAW) and 68 to 88 (FFVF…LVPI).

The protein resides in the cell membrane. This is an uncharacterized protein from Haemophilus influenzae (strain ATCC 51907 / DSM 11121 / KW20 / Rd).